A 170-amino-acid chain; its full sequence is Cathelicidin antimicrobial peptide (170 aa).

A signal peptide spans 1 to 30 (MDTQRDSPSLGRWSLVLLLLGLVMPLAIVA). Residues 31–131 (QVLSYQEAVL…DISCDKDNRR (101 aa)) constitute a propeptide, cathelin-like domain (CLD). Disulfide bonds link C86–C97 and C108–C125. The active core stretch occupies residues 150-162 (FKRIVQRIKDFLQ).

The protein belongs to the cathelicidin family. As to quaternary structure, monomer, homodimer or homotrimer (in vitro). Oligomerizes as tetra- or hexamer in solution (in vitro). In terms of processing, proteolytically cleaved by proteinase PRTN3 into antibacterial peptide LL-37. Proteolytically cleaved by cathepsin CTSG and neutrophil elastase ELANE. Post-translationally, resistant to proteolytic degradation in solution, and when bound to both zwitterionic (mimicking mammalian membranes) and negatively charged membranes (mimicking bacterial membranes). After secretion onto the skin surface, the CAMP gene product is processed by a serine protease-dependent mechanism into multiple novel antimicrobial peptides distinct from and shorter than cathelicidin LL-37. These peptides show enhanced antimicrobial action, acquiring the ability to kill skin pathogens such as S.aureus, E.coli and C.albicans. These peptides have lost the ability to stimulate CXCL8/IL8 release from keratinocytes. The peptides act synergistically, killing bacteria at lower concentrations when present together, and maintain activity at increased salt condition.

It is found in the secreted. The protein localises to the vesicle. Functionally, antimicrobial protein that is an integral component of the innate immune system. Binds to bacterial lipopolysaccharides (LPS). Acts via neutrophil N-formyl peptide receptors to enhance the release of CXCL2. Postsecretory processing generates multiple cathelicidin antimicrobial peptides with various lengths which act as a topical antimicrobial defense in sweat on skin. The unprocessed precursor form, cathelicidin antimicrobial peptide, inhibits the growth of Gram-negative E.coli and E.aerogenes with efficiencies comparable to that of the mature peptide LL-37 (in vitro). In terms of biological role, antimicrobial peptide that is an integral component of the innate immune system. Binds to bacterial lipopolysaccharides (LPS). Causes membrane permeabilization by forming transmembrane pores (in vitro). Causes lysis of E.coli. Exhibits antimicrobial activity against Gram-negative bacteria such as P.aeruginosa, S.typhimurium, E.aerogenes, E.coli and P.syringae, Gram-positive bacteria such as L.monocytogenes, S.epidermidis, S.pyogenes and S.aureus, as well as vancomycin-resistant enterococci (in vitro). Exhibits antimicrobial activity against methicillin-resistant S.aureus, P.mirabilis, and C.albicans in low-salt media, but not in media containing 100 mM NaCl (in vitro). Forms chiral supramolecular assemblies with quinolone signal (PQS) molecules of P.aeruginosa, which may lead to interference of bacterial quorum signaling and perturbance of bacterial biofilm formation. May form supramolecular fiber-like assemblies on bacterial membranes. Induces cytokine and chemokine producation as well as TNF/TNFA and CSF2/GMCSF production in normal human keratinocytes. Exhibits hemolytic activity against red blood cells. Exhibits antimicrobial activity against E.coli and B.megaterium (in vitro). The protein is Cathelicidin antimicrobial peptide of Nomascus leucogenys (Northern white-cheeked gibbon).